Reading from the N-terminus, the 232-residue chain is Ribose-5-phosphate isomerase A (232 aa).

Substrate is bound by residues 29–32 (TGST), 84–87 (DGAD), and 97–100 (KGGG). Glu106 (proton acceptor) is an active-site residue. A substrate-binding site is contributed by Lys124.

This sequence belongs to the ribose 5-phosphate isomerase family. In terms of assembly, homodimer.

It carries out the reaction aldehydo-D-ribose 5-phosphate = D-ribulose 5-phosphate. Its pathway is carbohydrate degradation; pentose phosphate pathway; D-ribose 5-phosphate from D-ribulose 5-phosphate (non-oxidative stage): step 1/1. Its function is as follows. Catalyzes the reversible conversion of ribose-5-phosphate to ribulose 5-phosphate. This Brucella suis biovar 1 (strain 1330) protein is Ribose-5-phosphate isomerase A.